A 458-amino-acid polypeptide reads, in one-letter code: ATP-dependent protease ATPase subunit HslU (458 aa).

ATP-binding positions include Val-18, 60 to 65 (GVGKTE), Asp-270, Glu-335, and Arg-407.

The protein belongs to the ClpX chaperone family. HslU subfamily. A double ring-shaped homohexamer of HslV is capped on each side by a ring-shaped HslU homohexamer. The assembly of the HslU/HslV complex is dependent on binding of ATP.

It localises to the cytoplasm. Functionally, ATPase subunit of a proteasome-like degradation complex; this subunit has chaperone activity. The binding of ATP and its subsequent hydrolysis by HslU are essential for unfolding of protein substrates subsequently hydrolyzed by HslV. HslU recognizes the N-terminal part of its protein substrates and unfolds these before they are guided to HslV for hydrolysis. The sequence is that of ATP-dependent protease ATPase subunit HslU from Desulfitobacterium hafniense (strain DSM 10664 / DCB-2).